A 268-amino-acid polypeptide reads, in one-letter code: Zinc finger protein SNAI2 (268 aa).

An SNAG domain region spans residues 1–20 (MPRSFLVKKHFNASKKPNYS). A disordered region spans residues 80–117 (PASLGRVSPPPPSDTSSKDHSGSESPISDEEERLQSKL). 4 consecutive C2H2-type zinc fingers follow at residues 128–150 (FQCN…KQLH), 159–181 (FSCK…IRTH), 185–207 (CVCK…IRTH), and 213–235 (FSCS…LQTH). The segment at 241–264 (YQCKSCSKTFSRMSLLHKHEESGC) adopts a C2H2-type 5; atypical zinc-finger fold.

Belongs to the snail C2H2-type zinc-finger protein family. Interacts (via SNAG domain) with LIMD1 (via LIM domains), WTIP (via LIM domains) and AJUBA (via LIM domains). Interacts (via zinc fingers) with KPNA2, KPNB1, and TNPO1. May interact (via zinc fingers) with IPO7. Phosphorylated by GSK3B. Once phosphorylated, it becomes a target for ubiquitination. In terms of processing, ubiquitinated by the SCF(FBXO11) complex; ubiquitination requires previous GSK3B-mediated SNAI2 phosphorylation.

It is found in the nucleus. Its subcellular location is the cytoplasm. Functionally, transcriptional repressor that modulates both activator-dependent and basal transcription. Involved in the generation and migration of neural crest cells. Plays a role in mediating RAF1-induced transcriptional repression of the TJ protein, occludin (OCLN) and subsequent oncogenic transformation of epithelial cells. Represses BRCA2 expression by binding to its E2-box-containing silencer and recruiting CTBP1 and HDAC1 in breast cells. In epidermal keratinocytes, binds to the E-box in ITGA3 promoter and represses its transcription. Involved in the regulation of ITGB1 and ITGB4 expression and cell adhesion and proliferation in epidermal keratinocytes. Binds to E-box2 domain of BSG and activates its expression during TGFB1-induced epithelial-mesenchymal transition (EMT) in hepatocytes. Represses E-Cadherin/CDH1 transcription via E-box elements. Involved in osteoblast maturation. Binds to RUNX2 and SOC9 promoters and may act as a positive and negative transcription regulator, respectively, in osteoblasts. Binds to CXCL12 promoter via E-box regions in mesenchymal stem cells and osteoblasts. Plays an essential role in TWIST1-induced EMT and its ability to promote invasion and metastasis. The polypeptide is Zinc finger protein SNAI2 (SNAI2) (Bos taurus (Bovine)).